A 160-amino-acid polypeptide reads, in one-letter code: Transcriptional repressor NrdR (160 aa).

A compositionally biased stretch (polar residues) spans 1 to 11 (MRCPSCNSLDT). Positions 1–20 (MRCPSCNSLDTQVKDSRPTE) are disordered. The segment at 3 to 34 (CPSCNSLDTQVKDSRPTEDSAVIRRRRVCMAC) is a zinc-finger region. One can recognise an ATP-cone domain in the interval 49–139 (LTVIKRNGRR…VYRNFREAKD (91 aa)).

The protein belongs to the NrdR family. The cofactor is Zn(2+).

Its function is as follows. Negatively regulates transcription of bacterial ribonucleotide reductase nrd genes and operons by binding to NrdR-boxes. The chain is Transcriptional repressor NrdR from Nitrobacter hamburgensis (strain DSM 10229 / NCIMB 13809 / X14).